Here is a 511-residue protein sequence, read N- to C-terminus: Glutamate/gamma-aminobutyrate antiporter (511 aa).

Over 1–13 the chain is Cytoplasmic; sequence MATSVQTGKAKQL. The chain crosses the membrane as a helical span at residues 14-36; it reads TLLGFFAITASMVMAVYEYPTFA. Topologically, residues 37 to 40 are periplasmic; the sequence is TSGF. Residues 41-64 form a helical membrane-spanning segment; the sequence is SLVFFLLLGGILWFIPVGLCAAEM. The Cytoplasmic portion of the chain corresponds to 65–85; sequence ATVDGWEEGGVFAWVSNTLGP. A helical transmembrane segment spans residues 86–112; the sequence is RWGFAAISFGYLQIAIGFIPMLYFVLG. The Periplasmic segment spans residues 113 to 126; that stretch reads ALSYILKWPALNED. Residues 127-147 form a helical membrane-spanning segment; that stretch reads PITKTIAALIILWALALTQFG. Residues 148–151 lie on the Cytoplasmic side of the membrane; sequence GTKY. Residues 152–180 form a helical membrane-spanning segment; sequence TARIAKVGFFAGILLPAFILIALAAIYLH. Over 181–201 the chain is Periplasmic; it reads SGAPVAIEMDSKTFFPDFSKV. A helical membrane pass occupies residues 202–225; it reads GTLVVFVAFILSYMGVEASATHVN. Topologically, residues 226–229 are cytoplasmic; the sequence is EMSN. The helical transmembrane segment at 230-259 threads the bilayer; that stretch reads PGRDYPLAMLLLMVAAICLSSVGGLSIAMV. Over 260–288 the chain is Periplasmic; the sequence is IPGNEINLSAGVMQTFTVLMSHVAPEIEW. A helical membrane pass occupies residues 289–322; it reads TVRVISALLLLGVLAEIASWIVGPSRGMYVTAQK. The Cytoplasmic segment spans residues 323–337; it reads NLLPAAFAKMNKNGV. The helical transmembrane segment at 338-359 threads the bilayer; sequence PVTLVISQLVITSIALIILTNT. Topologically, residues 360-362 are periplasmic; that stretch reads GGG. Residues 363–396 traverse the membrane as a helical segment; the sequence is NNMSFLIALALTVVIYLCAYFMLFIGYIVLVLKH. Topologically, residues 397-409 are cytoplasmic; sequence PDLKRTFNIPGGK. The helical transmembrane segment at 410 to 430 threads the bilayer; the sequence is GVKLVVAIVGLLTSIMAFIVS. The Periplasmic portion of the chain corresponds to 431 to 443; the sequence is FLPPDNIQGDSTD. The chain crosses the membrane as a helical span at residues 444–467; that stretch reads MYVELLVVSFLVVLALPFILYAVH. The Cytoplasmic segment spans residues 468–511; sequence DRKGKANTGVTLEPINSQNAPKGHFFLHPRARSPHYIVMNDKKH.

Belongs to the amino acid-polyamine-organocation (APC) superfamily. Glutamate:GABA antiporter (GGA) (TC 2.A.3.7) family. Monomer.

Its subcellular location is the cell inner membrane. The catalysed reaction is 4-aminobutanoate(in) + L-glutamate(out) = 4-aminobutanoate(out) + L-glutamate(in). Shows pH-dependent activity. The Glu/GABA transport activity is robust at pH 4.5 and rapidly decreases with increasing pH, with no detectable activity at pH 6.5 or above. The Glu analog L-trans-pyrrolidine-2,4-dicarboxylic acid (L-PDC) blocks the uptake of glutamate by selective inhibition. Its function is as follows. Involved in glutaminase-dependent acid resistance. Exchanges extracellular glutamate (Glu) for intracellular gamma-aminobutyric acid (GABA) under acidic conditions. The protonation states of substrates are crucial for transport. Selectively transports Glu with no net charge and GABA with a positive charge. Also efficiently transports glutamine and, to a smaller extent, methionine and leucine. When the extracellular pH drops below 2.5, can import L-glutamine and export either glutamate or GABA. The ability to survive the extremely acidic conditions of the stomach is essential for successful colonization of the host by commensal and pathogenic bacteria. This chain is Glutamate/gamma-aminobutyrate antiporter, found in Escherichia coli (strain K12).